The chain runs to 594 residues: MVKHTKSKNDFDAELLLSETSKIGDPWVPIYQTAVDIEAHHFETAMSNLIKQPNINSTVIMRADILKENVFDVENGDSTFVSKLINKVPEFPSENPDDVILHRYLDDIDLRTISLNNSELKLNTKCEVVRRIIPRNPFKDHIINQTCLVLSSSNADPESHTEKESDDSVLVVYIPHIQSSDEIPFYLPPVYGVGILYHKSTLSIQYLPFNYQNYKTSPEIQLSLRNLDVTERPIRIALRLLQTSSKHSLGAKSGYEKRVNHDLVVPKIAFQNRYITLKKKYSSNLVNSWCESTDPKKHVFEDLAIAAFLIELWTVKYKSREDFEFRDLGCGNGLLVYILNMEGYSGKGIDARSRKSWSTYPENVQNNLSEQIIIPSVLLKPHPALSRLIPNVTDNFRYFQAPQLPSKNNCSCEAENVPADDKSTSHTNSSSTLTTYSSANLLESSQVCTTEEFPPNTFIIGNHSDELTCWIPLLGYPFMVIPCCSHALSGAKVRYSPRKQQKSNQQQNVSTYGALVDHTEDLAKQMGWIVEKEMLRIPSTRNAAIIATKRQPHCIDENDEVTQTRVLDILALEGGAEGWVENSINLMKKAPRNH.

The protein belongs to the TRM44 family.

It localises to the cytoplasm. It catalyses the reaction uridine(44) in tRNA(Ser) + S-adenosyl-L-methionine = 2'-O-methyluridine(44) in tRNA(Ser) + S-adenosyl-L-homocysteine + H(+). Its function is as follows. Probable adenosyl-L-methionine (AdoMet)-dependent tRNA (uracil-O(2)-)-methyltransferase. The sequence is that of tRNA (uracil-O(2)-)-methyltransferase (TRM44) from Debaryomyces hansenii (strain ATCC 36239 / CBS 767 / BCRC 21394 / JCM 1990 / NBRC 0083 / IGC 2968) (Yeast).